Consider the following 246-residue polypeptide: Glandular kallikrein (246 aa).

A propeptide spanning residues 1 to 7 (APPIQSR) is cleaved from the precursor. A Peptidase S1 domain is found at 8–243 (IIGGRECEKN…YLDWINDTIT (236 aa)). 5 cysteine pairs are disulfide-bonded: Cys-14-Cys-158, Cys-33-Cys-49, Cys-135-Cys-204, Cys-169-Cys-183, and Cys-194-Cys-219. His-48 acts as the Charge relay system in catalysis. Asn-85 carries an N-linked (GlcNAc...) asparagine glycan. A kallikrein (autolysis) loop region spans residues 85–104 (NLSLLKXHTKADGKDYSHDL). Asp-103 functions as the Charge relay system in the catalytic mechanism. Catalysis depends on Ser-198, which acts as the Charge relay system. Asn-239 carries N-linked (GlcNAc...) asparagine glycosylation.

This sequence belongs to the peptidase S1 family. Kallikrein subfamily. In terms of assembly, monomer.

The catalysed reaction is Preferential cleavage of Arg-|-Xaa bonds in small molecule substrates. Highly selective action to release kallidin (lysyl-bradykinin) from kininogen involves hydrolysis of Met-|-Xaa or Leu-|-Xaa.. Glandular kallikreins cleave Met-Lys and Arg-Ser bonds in kininogen to release Lys-bradykinin. In Sus scrofa (Pig), this protein is Glandular kallikrein.